Here is a 425-residue protein sequence, read N- to C-terminus: UPF0229 protein SG1344 (425 aa).

Residues Gly-49–Glu-109 form a disordered region. Over residues Glu-50–Ile-59 the composition is skewed to polar residues. Residues Pro-77 to Arg-90 are compositionally biased toward basic and acidic residues.

Belongs to the UPF0229 family.

This chain is UPF0229 protein SG1344, found in Sodalis glossinidius (strain morsitans).